A 443-amino-acid polypeptide reads, in one-letter code: ATP-dependent protease ATPase subunit HslU (443 aa).

ATP is bound by residues Ile-18, Gly-60–Glu-65, Asp-256, Glu-321, and Arg-393.

This sequence belongs to the ClpX chaperone family. HslU subfamily. In terms of assembly, a double ring-shaped homohexamer of HslV is capped on each side by a ring-shaped HslU homohexamer. The assembly of the HslU/HslV complex is dependent on binding of ATP.

It is found in the cytoplasm. Functionally, ATPase subunit of a proteasome-like degradation complex; this subunit has chaperone activity. The binding of ATP and its subsequent hydrolysis by HslU are essential for unfolding of protein substrates subsequently hydrolyzed by HslV. HslU recognizes the N-terminal part of its protein substrates and unfolds these before they are guided to HslV for hydrolysis. This Buchnera aphidicola subsp. Acyrthosiphon pisum (strain 5A) protein is ATP-dependent protease ATPase subunit HslU.